The primary structure comprises 259 residues: tRNA (guanine-N(7)-)-methyltransferase (259 aa).

The disordered stretch occupies residues 1–74 (MGHHGQMHAQ…PAEDPDRPGP (74 aa)). Residues Glu-91, Glu-116, Asn-143, and Asp-166 each coordinate S-adenosyl-L-methionine. The active site involves Asp-166. Substrate contacts are provided by residues Lys-170, Asp-202, and 238 to 241 (TKYE).

It belongs to the class I-like SAM-binding methyltransferase superfamily. TrmB family.

The catalysed reaction is guanosine(46) in tRNA + S-adenosyl-L-methionine = N(7)-methylguanosine(46) in tRNA + S-adenosyl-L-homocysteine. The protein operates within tRNA modification; N(7)-methylguanine-tRNA biosynthesis. Catalyzes the formation of N(7)-methylguanine at position 46 (m7G46) in tRNA. This Mycobacterium avium (strain 104) protein is tRNA (guanine-N(7)-)-methyltransferase.